We begin with the raw amino-acid sequence, 280 residues long: GTP-binding protein rhoC (280 aa).

The interval 13 to 59 (TSRRHSLVTPPPSVAPRQNRMRSQSVRVSNGTVSTDNSMSSGRVSEA) is disordered. Positions 33–59 (MRSQSVRVSNGTVSTDNSMSSGRVSEA) are enriched in polar residues. 76–83 (GDGGCGKT) contributes to the GTP binding site. Residues 98 to 106 (YVPTVFENY) carry the Effector region motif. Residues 125–129 (DTAGQ) and 183–186 (LKSD) each bind GTP. The disordered stretch occupies residues 251-275 (WDTRLPSSSGKPGGKPIGGKKIKKR). Residue Cys277 is modified to Cysteine methyl ester. Cys277 carries the S-geranylgeranyl cysteine lipid modification. Positions 278–280 (KIL) are cleaved as a propeptide — removed in mature form.

This sequence belongs to the small GTPase superfamily. Rho family.

The protein resides in the cell membrane. This chain is GTP-binding protein rhoC (rhoC), found in Emericella nidulans (strain FGSC A4 / ATCC 38163 / CBS 112.46 / NRRL 194 / M139) (Aspergillus nidulans).